The chain runs to 914 residues: Chlorate reductase subunit alpha (914 aa).

A signal peptide (tat-type signal) is located at residues 1-32 (MNSPDEHNGRRRFLQFSAAALASAAASPSLWA). Positions 62–125 (DSVGVMTHSN…VYCSWSKQPD (64 aa)) constitute a 4Fe-4S Mo/W bis-MGD-type domain. [4Fe-4S] cluster-binding residues include histidine 69, cysteine 73, cysteine 77, and cysteine 111. Position 205 (aspartate 205) interacts with Mo-bis(molybdopterin guanine dinucleotide).

Belongs to the prokaryotic molybdopterin-containing oxidoreductase family. In terms of assembly, heterotrimer of alpha, beta and gamma subunits. The cofactor is [4Fe-4S] cluster. Mo-bis(molybdopterin guanine dinucleotide) is required as a cofactor. Post-translationally, predicted to be exported by the Tat system. The position of the signal peptide cleavage has not been experimentally proven.

The protein resides in the periplasm. It carries out the reaction chlorate + AH2 = chlorite + A + H2O. Functionally, terminal reductase that allows anaerobic growth on chlorate as the sole respiratory oxidant. This chain is Chlorate reductase subunit alpha (clrA), found in Ideonella dechloratans.